Consider the following 360-residue polypeptide: DNA polymerase IV (360 aa).

One can recognise a UmuC domain in the interval isoleucine 6–glycine 187. Residues aspartate 10 and aspartate 105 each coordinate Mg(2+). Glutamate 106 is a catalytic residue.

The protein belongs to the DNA polymerase type-Y family. Monomer. Requires Mg(2+) as cofactor.

The protein resides in the cytoplasm. The catalysed reaction is DNA(n) + a 2'-deoxyribonucleoside 5'-triphosphate = DNA(n+1) + diphosphate. Its function is as follows. Poorly processive, error-prone DNA polymerase involved in untargeted mutagenesis. Copies undamaged DNA at stalled replication forks, which arise in vivo from mismatched or misaligned primer ends. These misaligned primers can be extended by PolIV. Exhibits no 3'-5' exonuclease (proofreading) activity. May be involved in translesional synthesis, in conjunction with the beta clamp from PolIII. The sequence is that of DNA polymerase IV from Exiguobacterium sibiricum (strain DSM 17290 / CCUG 55495 / CIP 109462 / JCM 13490 / 255-15).